The following is a 365-amino-acid chain: 3-dehydroquinate synthase (365 aa).

NAD(+) is bound by residues 69–74, 103–107, 127–128, Lys140, and Lys149; these read DGEAHK, GVIGD, and TT. Zn(2+) is bound by residues Glu182, His245, and His262.

This sequence belongs to the sugar phosphate cyclases superfamily. Dehydroquinate synthase family. It depends on NAD(+) as a cofactor. Requires Co(2+) as cofactor. Zn(2+) serves as cofactor.

The protein resides in the cytoplasm. It carries out the reaction 7-phospho-2-dehydro-3-deoxy-D-arabino-heptonate = 3-dehydroquinate + phosphate. It participates in metabolic intermediate biosynthesis; chorismate biosynthesis; chorismate from D-erythrose 4-phosphate and phosphoenolpyruvate: step 2/7. Catalyzes the conversion of 3-deoxy-D-arabino-heptulosonate 7-phosphate (DAHP) to dehydroquinate (DHQ). This is 3-dehydroquinate synthase from Pseudomonas putida (strain ATCC 47054 / DSM 6125 / CFBP 8728 / NCIMB 11950 / KT2440).